The sequence spans 344 residues: Enoyl-[acyl-carrier-protein] reductase, mitochondrial (344 aa).

A mitochondrion-targeting transit peptide spans 1–14 (MLKVLSLRSALQRA). The active-site Proton donor is Y69. NADP(+) contacts are provided by residues N142, 168-171 (NSAV), 191-193 (RSR), 255-258 (YGGM), 280-282 (FWM), and K338.

It belongs to the zinc-containing alcohol dehydrogenase family. Quinone oxidoreductase subfamily. In terms of assembly, homodimer.

The protein localises to the mitochondrion. It catalyses the reaction a 2,3-saturated acyl-[ACP] + NADP(+) = a (2E)-enoyl-[ACP] + NADPH + H(+). Its function is as follows. Catalyzes the NADPH-dependent reduction of trans-2-enoyl thioesters in mitochondrial fatty acid synthesis (fatty acid synthesis type II). Fatty acid chain elongation in mitochondria uses acyl carrier protein (ACP) as an acyl group carrier, but the enzyme accepts both ACP and CoA thioesters as substrates in vitro. May provide the octanoyl chain used for lipoic acid biosynthesis, regulating protein lipoylation and mitochondrial respiratory activity. Involved in iron homeostasis; affecting Fe-S cluster assembly and ceramide metabolism. Required for proper morphology and bioenergetic functions of mitochondria. Required for maintenance of neurons. The sequence is that of Enoyl-[acyl-carrier-protein] reductase, mitochondrial from Caenorhabditis elegans.